The sequence spans 69 residues: MLKQSGHKHGKLLKILKHNKPKERKFGKGARRCERCGRYDGIIRRYGLYLCKDCFKEVAHELGFFKWGE.

4 residues coordinate Zn(2+): C33, C36, C51, and C54.

This sequence belongs to the universal ribosomal protein uS14 family. Zinc-binding uS14 subfamily. In terms of assembly, part of the 30S ribosomal subunit. Requires Zn(2+) as cofactor.

Its function is as follows. Binds 16S rRNA, required for the assembly of 30S particles. This chain is Small ribosomal subunit protein uS14, found in Nanoarchaeum equitans (strain Kin4-M).